The chain runs to 453 residues: Cytochrome P450 monooxygenase CYP2 (453 aa).

The helical transmembrane segment at Met-13–Ser-29 threads the bilayer. N-linked (GlcNAc...) asparagine glycosylation is present at Asn-85. Cys-397 provides a ligand contact to heme.

It belongs to the cytochrome P450 family. The cofactor is heme.

Its subcellular location is the membrane. Its pathway is secondary metabolite biosynthesis. Cytochrome P450 monooxygenase; part of the gene cluster that mediates the biosynthesis of a tyrosine-derived cytochalasan acting as a fungal signal recognized by resistant rice plants and leads to avirulence in Pi33 resistant rice cultivars. The first step in the pathway is catalyzed by the hybrid PKS-NRPS ACE1, assisted by the enoyl reductase RAP1, that are responsible for fusion of the tyrosine precursor and the polyketide backbone. The polyketide synthase module (PKS) of ACE1 is responsible for the synthesis of the polyketide backbone and the downstream nonribosomal peptide synthetase (NRPS) amidates the carboxyl end of the polyketide with the tyrosine precursor. Because ACE1 lacks a designated enoylreductase (ER) domain, the required activity is provided the enoyl reductase RAP1. Reduction by the hydrolyase ORFZ, followed by dehydration and intra-molecular Diels-Alder cyclization by the Diels-Alderase ORF3 then yield the required isoindolone-fused macrocycle. A number of oxidative steps catalyzed by the tailoring enzymes identified within the cluster, including cytochrome P450 monooxygenases CYP1 to CYP4, the FAD-linked oxidoreductase OXR2 and the short-chain dehydrogenase/reductase OXR1, are further required to afford the final cytochalasans that confer avirulence and which have still to be identified. The monooxygenase CYP1 has been shown to be a site-selective C-18 hydroxylase whereas the function of CYP3 is the site-selective epoxidation of the C-6/C-7 olefin that is present in some intermediate compounds. Finally, SYN2 and RAP2 are not required for avirulence in Pi33 resistant rice cultivars. The protein is Cytochrome P450 monooxygenase CYP2 of Pyricularia oryzae (strain 70-15 / ATCC MYA-4617 / FGSC 8958) (Rice blast fungus).